We begin with the raw amino-acid sequence, 335 residues long: Mesoderm-specific transcript homolog protein (335 aa).

3 helical membrane-spanning segments follow: residues tryptophan 13–proline 33, isoleucine 88–glycine 108, and valine 266–valine 286. Positions isoleucine 71–aspartate 310 constitute an AB hydrolase-1 domain. The RVIALD signature appears at arginine 98–aspartate 103.

This sequence belongs to the AB hydrolase superfamily. No detectable transcripts during preimplantation development. Isoform 1 was not detected in either in vitro-matured oocytes (IVF) or parthenogenetically activated (PA) blastocyst. Isoform 2 was expressed in IVF and PA blastocysts.

It localises to the endoplasmic reticulum membrane. This chain is Mesoderm-specific transcript homolog protein (MEST), found in Bos taurus (Bovine).